A 418-amino-acid chain; its full sequence is Nucleoside permease NupC (418 aa).

9 consecutive transmembrane segments (helical) span residues 2-22 (IFSS…AWVF), 34-54 (IVSA…VPLG), 93-113 (IGGF…ASLI), 174-194 (IFAV…AGYA), 198-218 (IPLP…LLFA), 264-284 (LLAF…VGGF), 292-314 (LGLI…WSQA), 354-374 (AIIT…MLIG), and 395-415 (VLVG…FIGL).

This sequence belongs to the concentrative nucleoside transporter (CNT) (TC 2.A.41) family.

It is found in the cell inner membrane. In terms of biological role, involved in purine nucleosides uptake. Could also be involved in uptake of nucleobases. The sequence is that of Nucleoside permease NupC from Helicobacter pylori (strain ATCC 700392 / 26695) (Campylobacter pylori).